The sequence spans 124 residues: Astakine (124 aa).

Residues 1 to 21 form the signal peptide; the sequence is MAVSSAVRMLSVACLVVSAAG. Intrachain disulfides connect Cys28–Cys40, Cys34–Cys52, Cys39–Cys91, Cys62–Cys99, and Cys93–Cys106.

The protein belongs to the AVIT (prokineticin) family.

It is found in the secreted. Functionally, cytokine directly involved in hematopoiesis. The protein is Astakine of Penaeus monodon (Giant tiger prawn).